The following is a 424-amino-acid chain: Glutamate-1-semialdehyde 2,1-aminomutase (424 aa).

At lysine 268 the chain carries N6-(pyridoxal phosphate)lysine.

It belongs to the class-III pyridoxal-phosphate-dependent aminotransferase family. HemL subfamily. Pyridoxal 5'-phosphate serves as cofactor.

The protein localises to the cytoplasm. It catalyses the reaction (S)-4-amino-5-oxopentanoate = 5-aminolevulinate. Its pathway is porphyrin-containing compound metabolism; protoporphyrin-IX biosynthesis; 5-aminolevulinate from L-glutamyl-tRNA(Glu): step 2/2. The chain is Glutamate-1-semialdehyde 2,1-aminomutase from Methanosarcina acetivorans (strain ATCC 35395 / DSM 2834 / JCM 12185 / C2A).